Here is a 299-residue protein sequence, read N- to C-terminus: MSEPIDLSQIAPTLKAEILAEALPYIRRYHGKTVVIKYGGNAMTEERLKQGFARDVILLKLVGINPVIVHGGGPQIDHALKKIGKAGTFIQGMRVTDEETMEVVEWVLGGEVQQDIVMLINHFGGHAVGLTGKDGGLIHARKLLMPDRDNPGQYIDIGQVGEVEAINPAVVKALQDDAFIPVISPIGFGEDGLSYNINADLVAGKLATVLNAEKLLMMTNIPGVMDKDGNLLTDLSAREIDALFEDGTISGGMLPKISSALDAAKSGVKSVHIVDGRIEHSVLLEILTDQPFGTMIRSH.

Substrate-binding positions include 72–73 (GG), R94, and N196.

The protein belongs to the acetylglutamate kinase family. ArgB subfamily.

The protein localises to the cytoplasm. It catalyses the reaction N-acetyl-L-glutamate + ATP = N-acetyl-L-glutamyl 5-phosphate + ADP. Its pathway is amino-acid biosynthesis; L-arginine biosynthesis; N(2)-acetyl-L-ornithine from L-glutamate: step 2/4. Functionally, catalyzes the ATP-dependent phosphorylation of N-acetyl-L-glutamate. This is Acetylglutamate kinase from Burkholderia vietnamiensis (strain G4 / LMG 22486) (Burkholderia cepacia (strain R1808)).